Reading from the N-terminus, the 688-residue chain is Potassium-transporting ATPase ATP-binding subunit (688 aa).

A run of 4 helical transmembrane segments spans residues 35 to 55 (VMFVVYVGSILTTILWVQALG), 62 to 82 (AGFILAITIWLWFTVLFANFA), 219 to 239 (IALTILLVALTIVFLGVIVTL), and 260 to 280 (VLIALLVCLIPTTIAGLLSAI). Asp-313 acts as the 4-aspartylphosphate intermediate in catalysis. ATP is bound by residues Asp-350, Glu-354, 383–390 (FSAHTRMS), and Lys-401. Asp-524 and Asp-528 together coordinate Mg(2+). The next 3 helical transmembrane spans lie at 594–614 (FAIIPAAFVTTYPQLAALNVM), 622–642 (AILSAVIFNALIIVFLIPLAL), and 668–688 (VIVPFIGIKLIDLAIAAVGLA).

The protein belongs to the cation transport ATPase (P-type) (TC 3.A.3) family. Type IA subfamily. In terms of assembly, the system is composed of three essential subunits: KdpA, KdpB and KdpC.

The protein localises to the cell inner membrane. The catalysed reaction is K(+)(out) + ATP + H2O = K(+)(in) + ADP + phosphate + H(+). Part of the high-affinity ATP-driven potassium transport (or Kdp) system, which catalyzes the hydrolysis of ATP coupled with the electrogenic transport of potassium into the cytoplasm. This subunit is responsible for energy coupling to the transport system and for the release of the potassium ions to the cytoplasm. This Dechloromonas aromatica (strain RCB) protein is Potassium-transporting ATPase ATP-binding subunit.